Reading from the N-terminus, the 967-residue chain is Probable helicase DDB_G0274399 (967 aa).

The tract at residues 161–192 (EMTDDEDTAPTSAATHVGAPTKSTTTTTTTTT) is disordered. 357-364 (GPPGTGKT) provides a ligand contact to ATP. 2 disordered regions span residues 529–553 (SAIPSSSASTAAATSGSSRSTQDTS) and 892–967 (QKQK…RTRR). Positions 890-949 (NLQKQKDIEKRKKQHKRQKQKSKENDKKKQLKKRKELNNNDNNNNNKESSNKEVQEITNA) form a coiled coil. The span at 900–909 (RKKQHKRQKQ) shows a compositional bias: basic residues. Over residues 928 to 937 (NNDNNNNNKE) the composition is skewed to low complexity.

It belongs to the DNA2/NAM7 helicase family.

It localises to the nucleus. In Dictyostelium discoideum (Social amoeba), this protein is Probable helicase DDB_G0274399.